Consider the following 173-residue polypeptide: Large ribosomal subunit protein uL10 (173 aa).

The protein belongs to the universal ribosomal protein uL10 family. As to quaternary structure, part of the ribosomal stalk of the 50S ribosomal subunit. The N-terminus interacts with L11 and the large rRNA to form the base of the stalk. The C-terminus forms an elongated spine to which L12 dimers bind in a sequential fashion forming a multimeric L10(L12)X complex.

Forms part of the ribosomal stalk, playing a central role in the interaction of the ribosome with GTP-bound translation factors. The sequence is that of Large ribosomal subunit protein uL10 from Bifidobacterium longum (strain DJO10A).